Here is a 137-residue protein sequence, read N- to C-terminus: MSIIKEFREFAMRGNVVDLAVGVIIGALFGKIVSSLVSDIIMPPLGLLIGGVDFKQFALFLRNAQGGIPAVVMNYGAFIQNIFDFIIVAFAIFIAIKLMNKMRCKQEDTPAAPPKPSAEEKLLAEIRDLLKEQQTRQ.

The Cytoplasmic portion of the chain corresponds to 1 to 16 (MSIIKEFREFAMRGNV). A helical transmembrane segment spans residues 17 to 45 (VDLAVGVIIGALFGKIVSSLVSDIIMPPL). The Periplasmic portion of the chain corresponds to 46 to 74 (GLLIGGVDFKQFALFLRNAQGGIPAVVMN). A helical transmembrane segment spans residues 75 to 94 (YGAFIQNIFDFIIVAFAIFI). At 95 to 137 (AIKLMNKMRCKQEDTPAAPPKPSAEEKLLAEIRDLLKEQQTRQ) the chain is on the cytoplasmic side.

It belongs to the MscL family. As to quaternary structure, homopentamer.

The protein localises to the cell inner membrane. Its function is as follows. Channel that opens in response to stretch forces in the membrane lipid bilayer. Forms a nonselective ion channel with a conductance of about 4 nanosiemens. May participate in the regulation of osmotic pressure changes within the cell. In Pectobacterium carotovorum (Erwinia carotovora), this protein is Large-conductance mechanosensitive channel.